We begin with the raw amino-acid sequence, 356 residues long: Histidinol-phosphate aminotransferase 2 (356 aa).

Lys-214 bears the N6-(pyridoxal phosphate)lysine mark.

It belongs to the class-II pyridoxal-phosphate-dependent aminotransferase family. Histidinol-phosphate aminotransferase subfamily. In terms of assembly, homodimer. Pyridoxal 5'-phosphate serves as cofactor.

It carries out the reaction L-histidinol phosphate + 2-oxoglutarate = 3-(imidazol-4-yl)-2-oxopropyl phosphate + L-glutamate. It participates in amino-acid biosynthesis; L-histidine biosynthesis; L-histidine from 5-phospho-alpha-D-ribose 1-diphosphate: step 7/9. This Dechloromonas aromatica (strain RCB) protein is Histidinol-phosphate aminotransferase 2.